Here is a 398-residue protein sequence, read N- to C-terminus: S-adenosylmethionine synthase (398 aa).

Residues 1–21 (MAANRRLFTSESVTEGHPDKM) are disordered. ATP is bound at residue His-17. Asp-19 provides a ligand contact to Mg(2+). Glu-45 is a K(+) binding site. Positions 58 and 101 each coordinate L-methionine. A flexible loop region spans residues 101–111 (QSADIAGGVNQ). ATP contacts are provided by residues 177–179 (DGK), 244–245 (RF), Asp-253, 259–260 (RK), Ala-276, and Lys-280. An L-methionine-binding site is contributed by Asp-253. Lys-284 provides a ligand contact to L-methionine.

Belongs to the AdoMet synthase family. In terms of assembly, homotetramer; dimer of dimers. Requires Mg(2+) as cofactor. K(+) serves as cofactor.

The protein resides in the cytoplasm. The enzyme catalyses L-methionine + ATP + H2O = S-adenosyl-L-methionine + phosphate + diphosphate. It participates in amino-acid biosynthesis; S-adenosyl-L-methionine biosynthesis; S-adenosyl-L-methionine from L-methionine: step 1/1. Its function is as follows. Catalyzes the formation of S-adenosylmethionine (AdoMet) from methionine and ATP. The overall synthetic reaction is composed of two sequential steps, AdoMet formation and the subsequent tripolyphosphate hydrolysis which occurs prior to release of AdoMet from the enzyme. This chain is S-adenosylmethionine synthase, found in Oceanobacillus iheyensis (strain DSM 14371 / CIP 107618 / JCM 11309 / KCTC 3954 / HTE831).